The following is a 161-amino-acid chain: Negative cofactor 2 complex subunit beta (161 aa).

The 65-residue stretch at 11–75 (SLPKATVQKM…IAAEHIIKAL (65 aa)) folds into the Histone-fold domain. Over residues 93–107 (EHKEQQKNREKKSSK) the composition is skewed to basic and acidic residues. Disordered stretches follow at residues 93–116 (EHKE…VSRD) and 130–161 (RERF…TKEN). Polar residues predominate over residues 135–147 (NQNIAHDNHTTTA).

It belongs to the NC2 beta/DR1 family.

The protein resides in the cytoplasm. It is found in the nucleus. The sequence is that of Negative cofactor 2 complex subunit beta (ncb2) from Schizosaccharomyces pombe (strain 972 / ATCC 24843) (Fission yeast).